The primary structure comprises 272 residues: 3-methyl-2-oxobutanoate hydroxymethyltransferase (272 aa).

Residues Asp-54 and Asp-93 each contribute to the Mg(2+) site. Residues 54 to 55, Asp-93, and Lys-123 each bind 3-methyl-2-oxobutanoate; that span reads DS. Glu-125 contacts Mg(2+). Glu-190 acts as the Proton acceptor in catalysis.

It belongs to the PanB family. In terms of assembly, homodecamer; pentamer of dimers. The cofactor is Mg(2+).

Its subcellular location is the cytoplasm. The enzyme catalyses 3-methyl-2-oxobutanoate + (6R)-5,10-methylene-5,6,7,8-tetrahydrofolate + H2O = 2-dehydropantoate + (6S)-5,6,7,8-tetrahydrofolate. It participates in cofactor biosynthesis; (R)-pantothenate biosynthesis; (R)-pantoate from 3-methyl-2-oxobutanoate: step 1/2. Its function is as follows. Catalyzes the reversible reaction in which hydroxymethyl group from 5,10-methylenetetrahydrofolate is transferred onto alpha-ketoisovalerate to form ketopantoate. This Tropheryma whipplei (strain Twist) (Whipple's bacillus) protein is 3-methyl-2-oxobutanoate hydroxymethyltransferase.